The chain runs to 114 residues: Putative toxin HigB3 (114 aa).

It belongs to the mycobacterial HigB family.

Putative toxic component of a type II toxin-antitoxin (TA) system. Its cognate antitoxin would be HigA3. Not toxic upon expression in M.smegmatis. This chain is Putative toxin HigB3, found in Mycobacterium tuberculosis (strain ATCC 25618 / H37Rv).